We begin with the raw amino-acid sequence, 219 residues long: Small ribosomal subunit protein uS3 (219 aa).

The KH type-2 domain maps to isoleucine 38–lysine 107.

Belongs to the universal ribosomal protein uS3 family. In terms of assembly, part of the 30S ribosomal subunit. Forms a tight complex with proteins S10 and S14.

In terms of biological role, binds the lower part of the 30S subunit head. Binds mRNA in the 70S ribosome, positioning it for translation. The sequence is that of Small ribosomal subunit protein uS3 from Exiguobacterium sp. (strain ATCC BAA-1283 / AT1b).